Consider the following 276-residue polypeptide: Large ribosomal subunit protein uL2 (276 aa).

The segment at 223–276 (AVMNPVDHPHGGGEGKNSVGRKSPLTPWGKPALGIKTRGRKTSDKFIVRRRNEK) is disordered. The segment covering 263 to 276 (KTSDKFIVRRRNEK) has biased composition (basic and acidic residues).

This sequence belongs to the universal ribosomal protein uL2 family. As to quaternary structure, part of the 50S ribosomal subunit. Forms a bridge to the 30S subunit in the 70S ribosome.

Its function is as follows. One of the primary rRNA binding proteins. Required for association of the 30S and 50S subunits to form the 70S ribosome, for tRNA binding and peptide bond formation. It has been suggested to have peptidyltransferase activity; this is somewhat controversial. Makes several contacts with the 16S rRNA in the 70S ribosome. This chain is Large ribosomal subunit protein uL2, found in Fusobacterium nucleatum subsp. nucleatum (strain ATCC 25586 / DSM 15643 / BCRC 10681 / CIP 101130 / JCM 8532 / KCTC 2640 / LMG 13131 / VPI 4355).